The primary structure comprises 61 residues: Protein A40 homolog (61 aa).

At 1-11 (MTMNKPKTNYA) the chain is on the cytoplasmic side. The helical; Signal-anchor for type II membrane protein transmembrane segment at 12 to 32 (GYACCVICGLIVGIIFTATLL) threads the bilayer. Over 33-61 (KAVERKLIHTPLIDKTIKDAYIREDCPTD) the chain is Extracellular.

The protein belongs to the poxviridae A40 protein family.

It is found in the host membrane. This chain is Protein A40 homolog (A45R), found in Homo sapiens (Human).